The sequence spans 617 residues: Membrane protein insertase YidC (617 aa).

Residues 8 to 28 (MFVAIGLSLLVLLGWQYFVAG) form a helical membrane-spanning segment. The segment covering 36–49 (QIEAQNKAAQQQPP) has biased composition (polar residues). The disordered stretch occupies residues 36 to 91 (QIEAQNKAAQQQPPGVTPDGVPSPSPKEGGPAAPAPGTLPTAQGGPVSREAALARS). Residues 61–81 (PKEGGPAAPAPGTLPTAQGGP) show a composition bias toward low complexity. The next 4 helical transmembrane spans lie at 387–407 (LFGN…LLFL), 461–481 (WPVL…FITI), 517–533 (FVHL…TMFV), and 549–569 (IFTF…AGLV).

It belongs to the OXA1/ALB3/YidC family. Type 1 subfamily. As to quaternary structure, interacts with the Sec translocase complex via SecD. Specifically interacts with transmembrane segments of nascent integral membrane proteins during membrane integration.

The protein resides in the cell inner membrane. Its function is as follows. Required for the insertion and/or proper folding and/or complex formation of integral membrane proteins into the membrane. Involved in integration of membrane proteins that insert both dependently and independently of the Sec translocase complex, as well as at least some lipoproteins. Aids folding of multispanning membrane proteins. The sequence is that of Membrane protein insertase YidC from Methylobacterium radiotolerans (strain ATCC 27329 / DSM 1819 / JCM 2831 / NBRC 15690 / NCIMB 10815 / 0-1).